Consider the following 125-residue polypeptide: Ribonuclease P protein component (125 aa).

It belongs to the RnpA family. In terms of assembly, consists of a catalytic RNA component (M1 or rnpB) and a protein subunit.

It carries out the reaction Endonucleolytic cleavage of RNA, removing 5'-extranucleotides from tRNA precursor.. RNaseP catalyzes the removal of the 5'-leader sequence from pre-tRNA to produce the mature 5'-terminus. It can also cleave other RNA substrates such as 4.5S RNA. The protein component plays an auxiliary but essential role in vivo by binding to the 5'-leader sequence and broadening the substrate specificity of the ribozyme. This Ruegeria pomeroyi (strain ATCC 700808 / DSM 15171 / DSS-3) (Silicibacter pomeroyi) protein is Ribonuclease P protein component.